Here is a 96-residue protein sequence, read N- to C-terminus: Keratin-associated protein 12-1 (96 aa).

14 tandem repeats follow at residues 10–14 (CQPAC), 15–19 (CAPSP), 24–28 (CYIPV), 30–34 (CQSSV), 35–39 (CVPVS), 45–49 (CVPVR), 50–54 (CQSSV), 55–59 (CVPVS), 60–64 (CRPVV), 70–74 (CQSSG), 75–79 (CCQPS), 80–84 (CTSVL), 85–89 (CRPIS), and 90–94 (CSTPS). The interval 10-94 (CQPACCAPSP…CRPISCSTPS (85 aa)) is 14 X 5 AA approximate repeats.

Belongs to the KRTAP type 12 family. As to quaternary structure, interacts with hair keratins. In terms of tissue distribution, restricted to a narrow region of the hair fiber cuticle, lying approximately 20 cell layers above the apex of the dermal papilla of the hair root; not detected in any other tissues.

Its function is as follows. In the hair cortex, hair keratin intermediate filaments are embedded in an interfilamentous matrix, consisting of hair keratin-associated proteins (KRTAP), which are essential for the formation of a rigid and resistant hair shaft through their extensive disulfide bond cross-linking with abundant cysteine residues of hair keratins. The matrix proteins include the high-sulfur and high-glycine-tyrosine keratins. This is Keratin-associated protein 12-1 (KRTAP12-1) from Homo sapiens (Human).